Here is a 497-residue protein sequence, read N- to C-terminus: Glycerol kinase (497 aa).

An ADP-binding site is contributed by Thr12. Residues Thr12, Thr13, and Ser14 each contribute to the ATP site. Thr12 is a sn-glycerol 3-phosphate binding site. Residue Arg16 coordinates ADP. Residues Arg82, Glu83, Tyr134, and Asp243 each contribute to the sn-glycerol 3-phosphate site. Residues Arg82, Glu83, Tyr134, Asp243, and Gln244 each contribute to the glycerol site. ADP is bound by residues Thr265 and Gly308. Residues Thr265, Gly308, Gln312, and Gly411 each coordinate ATP. Gly411 is an ADP binding site.

It belongs to the FGGY kinase family.

The catalysed reaction is glycerol + ATP = sn-glycerol 3-phosphate + ADP + H(+). It functions in the pathway polyol metabolism; glycerol degradation via glycerol kinase pathway; sn-glycerol 3-phosphate from glycerol: step 1/1. With respect to regulation, inhibited by fructose 1,6-bisphosphate (FBP). Its function is as follows. Key enzyme in the regulation of glycerol uptake and metabolism. Catalyzes the phosphorylation of glycerol to yield sn-glycerol 3-phosphate. In Xanthobacter autotrophicus (strain ATCC BAA-1158 / Py2), this protein is Glycerol kinase.